We begin with the raw amino-acid sequence, 252 residues long: 3-dehydroquinate dehydratase (252 aa).

Residues Ser21, 46–48 (EWR), and Arg82 contribute to the 3-dehydroquinate site. Catalysis depends on His143, which acts as the Proton donor/acceptor. The Schiff-base intermediate with substrate role is filled by Lys170. Arg213, Ser232, and Gln236 together coordinate 3-dehydroquinate.

This sequence belongs to the type-I 3-dehydroquinase family. As to quaternary structure, homodimer.

The catalysed reaction is 3-dehydroquinate = 3-dehydroshikimate + H2O. Its pathway is metabolic intermediate biosynthesis; chorismate biosynthesis; chorismate from D-erythrose 4-phosphate and phosphoenolpyruvate: step 3/7. Its function is as follows. Involved in the third step of the chorismate pathway, which leads to the biosynthesis of aromatic amino acids. Catalyzes the cis-dehydration of 3-dehydroquinate (DHQ) and introduces the first double bond of the aromatic ring to yield 3-dehydroshikimate. The protein is 3-dehydroquinate dehydratase of Shigella dysenteriae serotype 1 (strain Sd197).